A 147-amino-acid polypeptide reads, in one-letter code: UPF0306 protein YhbP (147 aa).

Belongs to the UPF0306 family.

This Escherichia coli O7:K1 (strain IAI39 / ExPEC) protein is UPF0306 protein YhbP.